A 142-amino-acid chain; its full sequence is MSGPRLLLGFDYGTRQIGVAVGQAITGQARELCVLKAQNGVPDWSRVEQLVKEWRPDAMVVGLPLNMDGTPSEMSERAERFARRLHGRFGLPVHTHDERLTTFEAKGYRLAQGQRDGYRRRPVDALAAALLLEGWLAERPAG.

Belongs to the YqgF nuclease family.

It localises to the cytoplasm. In terms of biological role, could be a nuclease involved in processing of the 5'-end of pre-16S rRNA. The sequence is that of Putative pre-16S rRNA nuclease from Azotobacter vinelandii (strain DJ / ATCC BAA-1303).